A 216-amino-acid chain; its full sequence is MNRAELSQKIIDTCLEMTKLGLNQGTAGNVSVRYKDGMLITPTGMPYHLMKTENIVYVDGNGKHEENKLPSSEWQFHLSVYHTRPEANAVVHNHSIHCAGLSILEKPIPAIHYMVAVSGTDHIPCVPYATFGSHKLASYVATGIKESKAILLAHHGLITCGENLDKALWLAQEVEVLASWYLKLLSTGLEIPLLSKEQMQVVLGKFHTYGLRIEES.

Residues 28 to 29 (GN), 43 to 44 (TG), and 71 to 72 (SS) contribute to the substrate site. Glutamate 73 (proton donor/acceptor) is an active-site residue. Glutamate 73, histidine 92, histidine 94, and histidine 155 together coordinate Zn(2+).

This sequence belongs to the aldolase class II family. AraD/FucA subfamily. As to quaternary structure, homotetramer. It depends on Zn(2+) as a cofactor.

The catalysed reaction is L-fuculose 1-phosphate = (S)-lactaldehyde + dihydroxyacetone phosphate. The protein operates within carbohydrate degradation; L-fucose degradation; L-lactaldehyde and glycerone phosphate from L-fucose: step 3/3. Involved in the degradation of L-fucose and D-arabinose. Catalyzes the reversible cleavage of L-fuculose 1-phosphate (Fuc1P) to yield dihydroxyacetone phosphate (DHAP) and L-lactaldehyde. The chain is L-fuculose phosphate aldolase from Haemophilus influenzae (strain ATCC 51907 / DSM 11121 / KW20 / Rd).